The sequence spans 567 residues: Laccase-7 (567 aa).

Residues 1-23 (MEGVRVPIACALILLAISSITSA) form the signal peptide. 2 Plastocyanin-like domains span residues 31-147 (NVQN…PKSG) and 157-310 (KEVP…YGGA). 3 N-linked (GlcNAc...) asparagine glycosylation sites follow: asparagine 34, asparagine 50, and asparagine 77. Residues histidine 81 and histidine 83 each coordinate Cu cation. N-linked (GlcNAc...) asparagine glycosylation occurs at asparagine 115. The Cu cation site is built by histidine 126 and histidine 128. Residues asparagine 186, asparagine 298, asparagine 339, asparagine 374, asparagine 386, asparagine 427, and asparagine 450 are each glycosylated (N-linked (GlcNAc...) asparagine). Positions 412–551 (DFPDQPPVKF…GMIFVVKNGP (140 aa)) constitute a Plastocyanin-like 3 domain. Positions 468, 471, 473, 530, 531, 532, and 536 each coordinate Cu cation.

This sequence belongs to the multicopper oxidase family. It depends on Cu cation as a cofactor. Predominantly expressed in tissues other than the inflorescence stem.

The protein resides in the secreted. It is found in the extracellular space. It localises to the apoplast. It catalyses the reaction 4 hydroquinone + O2 = 4 benzosemiquinone + 2 H2O. In terms of biological role, lignin degradation and detoxification of lignin-derived products. The polypeptide is Laccase-7 (LAC7) (Arabidopsis thaliana (Mouse-ear cress)).